Here is a 190-residue protein sequence, read N- to C-terminus: Small ribosomal subunit protein eS7A (190 aa).

At Ser2 the chain carries N-acetylserine. Residues Lys83, Lys84, and Lys124 each participate in a glycyl lysine isopeptide (Lys-Gly) (interchain with G-Cter in ubiquitin) cross-link.

It belongs to the eukaryotic ribosomal protein eS7 family. As to quaternary structure, component of the small ribosomal subunit (SSU). Mature yeast ribosomes consist of a small (40S) and a large (60S) subunit. The 40S small subunit contains 1 molecule of ribosomal RNA (18S rRNA) and 33 different proteins (encoded by 57 genes). The large 60S subunit contains 3 rRNA molecules (25S, 5.8S and 5S rRNA) and 46 different proteins (encoded by 81 genes). Interacts with snoRNA U3. uS11 interacts with MPP10. Component of the ribosomal small subunit (SSU) processome composed of at least 40 protein subunits and snoRNA U3. Post-translationally, N-terminally acetylated by acetyltransferase NatA. In terms of processing, ubiquitinated at Lys-83 and Lys-84 in response to stalled ribosomes, leading to activation of the No-Go Decay (NGD) pathway: first monoubiquitinated by MOT2/NOT4, followed by formation by HEL2 of 'Lys-63'-linked polyubiquitin chains on monoubiquitin.

It localises to the cytoplasm. It is found in the nucleus. The protein resides in the nucleolus. Its function is as follows. Component of the ribosome, a large ribonucleoprotein complex responsible for the synthesis of proteins in the cell. The small ribosomal subunit (SSU) binds messenger RNAs (mRNAs) and translates the encoded message by selecting cognate aminoacyl-transfer RNA (tRNA) molecules. The large subunit (LSU) contains the ribosomal catalytic site termed the peptidyl transferase center (PTC), which catalyzes the formation of peptide bonds, thereby polymerizing the amino acids delivered by tRNAs into a polypeptide chain. The nascent polypeptides leave the ribosome through a tunnel in the LSU and interact with protein factors that function in enzymatic processing, targeting, and the membrane insertion of nascent chains at the exit of the ribosomal tunnel. eS7 is involved in nucleolar processing of pre-18S ribosomal RNA and ribosome assembly. In Saccharomyces cerevisiae (strain ATCC 204508 / S288c) (Baker's yeast), this protein is Small ribosomal subunit protein eS7A.